The primary structure comprises 635 residues: Probable ethylene response sensor 2 (635 aa).

The next 3 membrane-spanning stretches (helical) occupy residues 24-44, 59-79, and 94-114; these read ISDFFIALAYFSIPLELIYFV, FGAFIVLCGATHLINLWTFAI, and ATAVVSCITALMLVHIIPDLL. Residues cysteine 66 and histidine 70 each contribute to the Cu cation site. Residues 159–308 enclose the GAF domain; sequence DRHTILRTTL…VVADQVAVAL (150 aa). The region spanning 351–589 is the Histidine kinase domain; sequence VMNHEMRTPM…MFFVKLGMPE (239 aa). Histidine 354 carries the post-translational modification Phosphohistidine; by autocatalysis.

Belongs to the ethylene receptor family. Homodimer. Cu cation serves as cofactor. In terms of tissue distribution, expressed in anthers and hulls.

Its subcellular location is the endoplasmic reticulum membrane. It carries out the reaction ATP + protein L-histidine = ADP + protein N-phospho-L-histidine.. Functionally, ethylene receptor related to bacterial two-component regulators. Acts as a negative regulator of ethylene signaling. May play a role in the regulation of flowering by up-regulating GI (GIGANTEA) and RCN1 and regulate starch accumulation by down-regulating the alpha-amylase AMY3D. The protein is Probable ethylene response sensor 2 of Oryza sativa subsp. indica (Rice).